The primary structure comprises 144 residues: Large ribosomal subunit protein uL15 (144 aa).

A compositionally biased stretch (polar residues) spans 1-12; the sequence is MRLNTLSPSLGS. Residues 1–51 form a disordered region; sequence MRLNTLSPSLGSRKNHKRLGRGIGSGFGKTAGRGHKGQKSRSGGHVNRGFE. Gly residues predominate over residues 21-31; the sequence is RGIGSGFGKTA.

This sequence belongs to the universal ribosomal protein uL15 family. As to quaternary structure, part of the 50S ribosomal subunit.

Binds to the 23S rRNA. In Buchnera aphidicola subsp. Schizaphis graminum (strain Sg), this protein is Large ribosomal subunit protein uL15.